Consider the following 712-residue polypeptide: Effector protein HopM1 (712 aa).

Residues 22-58 form a disordered region; the sequence is DTVPAQTAHPNAVTAGMNPPLTPDQSGSHATESSSAG. Residues 44 to 57 show a composition bias toward polar residues; sequence PDQSGSHATESSSA.

As to quaternary structure, interacts with the chaperone ShcM. Interacts with host plant BIG5/ATMIN7.

It is found in the secreted. It localises to the host membrane. In terms of biological role, involved in the suppression of basal resistance and promotion of disease symptoms in plants. Mediates the ubiquitination and degradation, via the host proteasome, of a low-abundance immunity-associated protein in Arabidopsis thaliana. May be involved in the inhibition of a host vesicle trafficking pathway. In Pseudomonas syringae pv. tomato (strain ATCC BAA-871 / DC3000), this protein is Effector protein HopM1 (hopM1).